A 164-amino-acid polypeptide reads, in one-letter code: Ubiquitin-fold modifier-conjugating enzyme 1 (164 aa).

The active-site Glycyl thioester intermediate is the Cys-116.

Belongs to the ubiquitin-conjugating enzyme family. UFC1 subfamily.

E2-like enzyme which forms an intermediate with UFM1 via a thioester linkage. This is Ubiquitin-fold modifier-conjugating enzyme 1 from Drosophila ananassae (Fruit fly).